The primary structure comprises 421 residues: E3 ubiquitin protein ligase DRIP1 (421 aa).

The RING-type zinc finger occupies 16 to 57; the sequence is CSICDNILRDATTISECLHTFCRKCIYEKITEDEIETCPVCN. 2 stretches are compositionally biased toward polar residues: residues 106–121 and 157–172; these read ISSL…AQAG and ESTS…TQNK. 2 disordered regions span residues 106 to 198 and 216 to 307; these read ISSL…WDSK and PLKS…QERR. Residues 178–198 are compositionally biased toward basic and acidic residues; it reads SCKESISNKENKDGDEPWDSK. Low complexity predominate over residues 218-227; sequence KSSASQGSGS. A compositionally biased stretch (basic residues) spans 244–253; the sequence is TKTKNKKRKC. The span at 262-271 shows a compositional bias: polar residues; it reads NGDPTTSETV. Basic residues predominate over residues 274 to 284; it reads KRMRTTQRKRS. Polar residues predominate over residues 285–294; sequence ATTLGDSRNL.

Interacts with DREB2A. Autoubiquitinated. Expressed in roots, leaves and flowers.

It localises to the nucleus. The enzyme catalyses S-ubiquitinyl-[E2 ubiquitin-conjugating enzyme]-L-cysteine + [acceptor protein]-L-lysine = [E2 ubiquitin-conjugating enzyme]-L-cysteine + N(6)-ubiquitinyl-[acceptor protein]-L-lysine.. The protein operates within protein modification; protein ubiquitination. In terms of biological role, E3 ubiquitin-protein ligase that acts as a negative regulator of the response to water stress. Mediates ubiquitination and subsequent proteasomal degradation of the drought-induced transcriptional activator DREB2A. Functionally redundant with DRIP2. The polypeptide is E3 ubiquitin protein ligase DRIP1 (DRIP1) (Arabidopsis thaliana (Mouse-ear cress)).